The chain runs to 334 residues: MTPPVTAPYCRFEKLGASDLDGDETLLGVIEHRTGHTGVSLAEGCPRTAVHTTTREDESFAEAWHAEGPKESGSHDGVAWARTPDYLFGVARVPEGGRYAAGTAAVYTGIFDLIGTLGYPSLARTWNYVSGINTPNADGLEVYRDFCVGRAEALDARGIDPATMPAATGIGAHGGGITCYFIAARAGDRVNMENPAVLTAHRYPQRYGPRPPVFSRATWLSPPGADDGRLFVSATAGIVGHETVHHGDVAAQCEVSLENIARVIGAENLGRHGLRRGYALADVDHLKVYVRHREDISTVRRICAERLSREATVAVLHTDIARTDLLVEIEGVVA.

Substrate-binding residues include tyrosine 143, arginine 150, tyrosine 203, and arginine 216. Glutamate 328 acts as the Proton acceptor in catalysis.

This sequence belongs to the FkbO/Hyg5 family. Monomer.

It catalyses the reaction chorismate + H2O = (3R,4R)-3,4-dihydroxy-3,4-dihydrobenzoate + pyruvate. In terms of biological role, involved in the biosynthesis of the macrocyclic amino acid-linked polyketides rapamycin which is a potent immunosuppressant that prevents T-cell proliferation through initial binding to the immunophilin FKBP12. Catalyzes the hydrolysis of chorismate via a 1,4-conjugate elimination of water to yield (4R,5R)-4,5-dihydroxycyclohexa-1,5-dienecarboxylic acid (DCDC). This is Chorismatase (rapK) from Streptomyces rapamycinicus (strain ATCC 29253 / DSM 41530 / NRRL 5491 / AYB-994) (Streptomyces hygroscopicus (strain ATCC 29253)).